A 182-amino-acid polypeptide reads, in one-letter code: Large ribosomal subunit protein uL16 (182 aa).

The protein belongs to the universal ribosomal protein uL16 family.

This chain is Large ribosomal subunit protein uL16, found in Thermococcus gammatolerans (strain DSM 15229 / JCM 11827 / EJ3).